A 144-amino-acid chain; its full sequence is Protein cornichon homolog 1 (144 aa).

At 1-10 the chain is on the cytoplasmic side; it reads MAFTFAAFCY. Residues 11-31 traverse the membrane as a helical segment; it reads MLALLLTATLIFFAIWHIIAF. Residues 32-56 lie on the Lumenal side of the membrane; the sequence is DELKTDYKNPIDQCNTLNPLVLPEY. A helical transmembrane segment spans residues 57–77; sequence LIHAFFCVMFLCAAEWLTLGL. Topologically, residues 78–122 are cytoplasmic; sequence NMPLLAYHIWRYMSRPVMSGPGLYDPTTIMNADILAYCQKEGWCK. The helical transmembrane segment at 123–143 threads the bilayer; it reads LAFYLLAFFYYLYGMIYVLVS. Position 144 (Ser-144) is a topological domain, lumenal.

The protein belongs to the cornichon family. Interacts with AREG immature precursor and with immature TGFA, i.e. with a prosegment and lacking full N-glycosylation, but not with the fully N-glycosylated form. In the Golgi apparatus, may form a complex with GORASP55 and transmembrane TGFA.

It is found in the endoplasmic reticulum membrane. The protein localises to the golgi apparatus membrane. In terms of biological role, involved in the selective transport and maturation of TGF-alpha family proteins. The chain is Protein cornichon homolog 1 (CNIH1) from Pongo abelii (Sumatran orangutan).